The chain runs to 547 residues: Alpha-humulene/(-)-(E)-beta-caryophyllene synthase (547 aa).

5 residues coordinate (2E,6E)-farnesyl diphosphate: Arg262, Asp299, Asp303, Arg442, and Asp445. Residues Asp299 and Asp303 each coordinate Mg(2+). A DDXXD motif motif is present at residues 299–303 (DDMYD). Positions 445, 446, 449, and 453 each coordinate Mg(2+).

Belongs to the terpene synthase family. Tpsa subfamily. Monomer. Mg(2+) serves as cofactor. Requires Mn(2+) as cofactor. Expressed exclusively in flowers. Expressed in the flower stigmata and also detected in the mesocarp cell layers of the silique wall.

It is found in the cytoplasm. The catalysed reaction is (2E,6E)-farnesyl diphosphate = (-)-(E)-beta-caryophyllene + diphosphate. It carries out the reaction (2E,6E)-farnesyl diphosphate = alpha-copaene + diphosphate. The enzyme catalyses (2E,6E)-farnesyl diphosphate = alpha-humulene + diphosphate. It catalyses the reaction (2E,6E)-farnesyl diphosphate = (1S,2S,4R)-beta-elemene + diphosphate. It functions in the pathway secondary metabolite biosynthesis; terpenoid biosynthesis. Involved in sesquiterpene (C15) biosynthesis. The major products are beta-caryophyllene and alpha-humulene. Does not convert geranyl diphosphate (GPP) to any monoterpenes. This is Alpha-humulene/(-)-(E)-beta-caryophyllene synthase from Arabidopsis thaliana (Mouse-ear cress).